The following is a 531-amino-acid chain: MPNISTESVNTTIAPSQPASIPKDTATLFNPAKPTAMPAQSSTDSVQPYHHKANHNQNRSVEQSSEVVSAASAKTTTATTNAPVNAAPKIGFVSLGCPKALVDSERIITELSRDGYQVASDYEGADLVVVNTCGFIESAVQESLDAIGEAISKNGKVIVTGCLGKEADKIREMHPAVLAVTGAHAYDDVIRAVALHVPKPDCGLDASYDPKIDLINEAGIKLTPSHYAYLKISEGCNHRCTFCIIPSLRGDLVSRPIDSVMNEALALKKAGVKELLIISQDTSAYGLDLKYKTSFWNGMPLKSKFYDLCQALNDLGIWVRLHYVYPYPHVDKVVELMGEKKLLPYLDIPFQHASHRILKAMKRPAHSENTLARIHAWREICPDIVIRSTFVVGFPGETEEDFQCLLDWLVEARLDRVGAFTYSEVEGAVANDLPNHVPEDVKQERYERLMTLQQDISAQKLQEKIGKTLMVLVDEIDREEGVAICRSYADAPEIDGHVYVDDIDAHVKVGQFLTVTIDDASEYDLFASYKG.

Composition is skewed to polar residues over residues 1–19 (MPNI…SQPA) and 55–67 (HNQN…SSEV). Positions 1-77 (MPNISTESVN…VSAASAKTTT (77 aa)) are disordered. A compositionally biased stretch (low complexity) spans 68 to 77 (VSAASAKTTT). The 111-residue stretch at 88-198 (PKIGFVSLGC…VIRAVALHVP (111 aa)) folds into the MTTase N-terminal domain. 6 residues coordinate [4Fe-4S] cluster: cysteine 97, cysteine 133, cysteine 162, cysteine 236, cysteine 240, and cysteine 243. Residues 222-459 (LTPSHYAYLK…MTLQQDISAQ (238 aa)) form the Radical SAM core domain. Residues 462 to 531 (QEKIGKTLMV…EYDLFASYKG (70 aa)) form the TRAM domain.

Belongs to the methylthiotransferase family. RimO subfamily. [4Fe-4S] cluster serves as cofactor.

It is found in the cytoplasm. The enzyme catalyses L-aspartate(89)-[ribosomal protein uS12]-hydrogen + (sulfur carrier)-SH + AH2 + 2 S-adenosyl-L-methionine = 3-methylsulfanyl-L-aspartate(89)-[ribosomal protein uS12]-hydrogen + (sulfur carrier)-H + 5'-deoxyadenosine + L-methionine + A + S-adenosyl-L-homocysteine + 2 H(+). Functionally, catalyzes the methylthiolation of an aspartic acid residue of ribosomal protein uS12. In Psychrobacter cryohalolentis (strain ATCC BAA-1226 / DSM 17306 / VKM B-2378 / K5), this protein is Ribosomal protein uS12 methylthiotransferase RimO.